The primary structure comprises 586 residues: ATPase family AAA domain-containing protein 3 (586 aa).

Residues 1-52 form a disordered region; sequence MSWLFGIKGSKGEGTGPPLPLPPVQPGGEGSGDGGAGDRPGPKDKWSNFDPT. At Ser-2 the chain carries N-acetylserine. Positions 2–49 are required for interaction with the inner surface of the mitochondrial outer membrane; sequence SWLFGIKGSKGEGTGPPLPLPPVQPGGEGSGDGGAGDRPGPKDKWSNF. At 2-245 the chain is on the mitochondrial intermembrane side; it reads SWLFGIKGSK…FRAFVTDWDK (244 aa). The span at 27–38 shows a compositional bias: gly residues; that stretch reads GGEGSGDGGAGD. The stretch at 55-218 forms a coiled coil; sequence ERAAKAAREL…QIRLKAAEHR (164 aa). The chain crosses the membrane as a helical span at residues 246–262; it reads VTATVAGLTLLAVGIYS. The Mitochondrial matrix portion of the chain corresponds to 263–586; that stretch reads AKNATSVAGR…QPPTLRTQAE (324 aa). An S100B-binding region spans residues 289–304; that stretch reads RITVLEALRHPIQVSR. Position 351-358 (351-358) interacts with ATP; sequence GPPGTGKT. Lys-490 bears the N6-acetyllysine; alternate mark. Lys-490 is modified (N6-succinyllysine; alternate). 2 positions are modified to N6-acetyllysine: Lys-494 and Lys-512.

Belongs to the AAA ATPase family. As to quaternary structure, can form homooligomers. Homodimer formation at the N-terminus may be regulated by ATP and is required for the interaction with the inner surface of the mitochondrial outer membrane and correct mitochondrial homeostasis. Interacts with components of the mitochondrial ribosome and with other proteins involved in mitochondrial RNA metabolism. May also interact with protein involved in lipid metabolism, including STARD9. May interact with FAM210A. Interacts with GADD45GIP1. Interacts with S100B in a Ca(+2)- and Zn(+2)-dependent manner; this interaction probably occurs in the cytosol prior to mitochondrial targeting. S100B could assist ATAD3A cytoplasmic processing, preventing aggregation and favoring mitochondrial localization. Interacts with HSP60/HSPD1. Forms heterooligomers with ATAD3B; this interaction may affect ATAD3A activity. Interacts with CLPB.

Its subcellular location is the mitochondrion inner membrane. It localises to the mitochondrion matrix. It is found in the mitochondrion nucleoid. Its function is as follows. Essential for mitochondrial network organization, mitochondrial metabolism and cell growth at organism and cellular level. May play an important role in mitochondrial protein synthesis. May also participate in mitochondrial DNA replication. May bind to mitochondrial DNA D-loops and contribute to nucleoid stability. Required for enhanced channeling of cholesterol for hormone-dependent steroidogenesis. Involved in mitochondrial-mediated antiviral innate immunity. Also involved in the mitochondrial DNA damage response by promoting signaling between damaged genomes and the mitochondrial membrane, leading to activation of the integrated stress response (ISR). The polypeptide is ATPase family AAA domain-containing protein 3 (ATAD3) (Bos taurus (Bovine)).